Reading from the N-terminus, the 143-residue chain is MLSFILIQNRQGKTRLAKWYAPFSDEQKIKLKGEVHRLVAPRDQKYQSNFVEFRNNKIVYRRYAGLFFCACVDTNDNELAFLEAIHFFVEVLDAFFGNVCELDLVFNFYKVYAILDEVFLAGEIEETSKQVVLTRLEHLDKLE.

The protein belongs to the adaptor complexes small subunit family. In terms of assembly, adaptor protein complex 2 (AP-2) is a heterotetramer composed of two large adaptins (alpha-type subunit APL3 and beta-type subunit APL1), a medium chain (mu-type subunit APM4) and a small adaptin (sigma-type subunit APS2).

It localises to the cell membrane. It is found in the membrane. The protein localises to the coated pit. In terms of biological role, component of the adaptor complexes which link clathrin to receptors in coated vesicles. Clathrin-associated protein complexes are believed to interact with the cytoplasmic tails of membrane proteins, leading to their selection and concentration. This is AP-2 complex subunit sigma (APS2) from Gibberella zeae (strain ATCC MYA-4620 / CBS 123657 / FGSC 9075 / NRRL 31084 / PH-1) (Wheat head blight fungus).